The following is a 347-amino-acid chain: Ferrochelatase (347 aa).

Fe cation-binding residues include His-193 and Glu-273.

The protein belongs to the ferrochelatase family.

The protein localises to the cytoplasm. It catalyses the reaction heme b + 2 H(+) = protoporphyrin IX + Fe(2+). The protein operates within porphyrin-containing compound metabolism; protoheme biosynthesis; protoheme from protoporphyrin-IX: step 1/1. Its function is as follows. Catalyzes the ferrous insertion into protoporphyrin IX. This chain is Ferrochelatase, found in Rickettsia canadensis (strain McKiel).